The sequence spans 342 residues: tRNA N6-adenosine threonylcarbamoyltransferase (342 aa).

Positions 119 and 123 each coordinate Fe cation. Substrate-binding positions include 142–146, aspartate 175, glycine 188, and asparagine 282; that span reads VVSGG. Residue aspartate 310 coordinates Fe cation.

The protein belongs to the KAE1 / TsaD family. The cofactor is Fe(2+).

Its subcellular location is the cytoplasm. It catalyses the reaction L-threonylcarbamoyladenylate + adenosine(37) in tRNA = N(6)-L-threonylcarbamoyladenosine(37) in tRNA + AMP + H(+). Functionally, required for the formation of a threonylcarbamoyl group on adenosine at position 37 (t(6)A37) in tRNAs that read codons beginning with adenine. Is involved in the transfer of the threonylcarbamoyl moiety of threonylcarbamoyl-AMP (TC-AMP) to the N6 group of A37, together with TsaE and TsaB. TsaD likely plays a direct catalytic role in this reaction. The polypeptide is tRNA N6-adenosine threonylcarbamoyltransferase (Moorella thermoacetica (strain ATCC 39073 / JCM 9320)).